Here is a 599-residue protein sequence, read N- to C-terminus: MTTQAPLTGLLPLNPQQLARLQAATTDFTPEQLAWVSGYFWGVLNPRSGADAVARAPERGSLGITLISASQTGNARRVAEALRDDLLAVNLNVNLVNAGDYKFKQIACEKLLVVVTSTQGEGEPPEEAVALHKFLFSKKAPRLNNTAFAVFSLGDTSYEFFCQAGKDFDNKLAELGGERLLDRVDADVEYQTVAAQWRARIVDVLKSRTPVTTPVPSVVSGAVNEIHTSPYTKEAPLRASLSVNQKITGRNSEKDVRHIEIDLGDSGLCYQPGDALGVWYQNDPALVKEIVELLWLKGDEPVAVDGKLLPLTEALQWHFELTVNTAGIVENYATLTRSEFLLPLVGDKAQLQHYAAATPIADMLRFSPSQLDADALVGLLRPLTPRLYSIASSQAEVENEVHLTVGVVRYDIEGRARAGGASSFLADRVDDEGEVRVFIEHNDNFRLPTNPETPIIMIGSGTGIAPFRAFIQQRAADEASGKNWLFFGNPHFTEDFLYQVEWQRYVKEGLLSRIDLAWSRDQKEKIYVQDKLRERGAELWRWINDGAHIYVCGDANRMAKDVEQALLEVIVEFGGMDLESADEYLSELRVARRYQRDVY.

The Flavodoxin-like domain occupies 64–202 (ITLISASQTG…VAAQWRARIV (139 aa)). Residues 70-75 (SQTGNA), 117-120 (STQG), and 153-162 (LGDTSYEFFC) each bind FMN. In terms of domain architecture, FAD-binding FR-type spans 234–448 (EAPLRASLSV…IEHNDNFRLP (215 aa)). FAD-binding positions include Thr322, Ala356, 386–389 (RLYS), 404–406 (TVG), Tyr410, and 419–422 (GGAS). Residues 519–520 (SR), 525–529 (KIYVQ), and Asp561 each bind NADP(+). FAD is bound at residue Tyr599.

Belongs to the NADPH-dependent sulphite reductase flavoprotein subunit CysJ family. It in the N-terminal section; belongs to the flavodoxin family. The protein in the C-terminal section; belongs to the flavoprotein pyridine nucleotide cytochrome reductase family. As to quaternary structure, alpha(8)-beta(8). The alpha component is a flavoprotein, the beta component is a hemoprotein. The cofactor is FAD. It depends on FMN as a cofactor.

The catalysed reaction is hydrogen sulfide + 3 NADP(+) + 3 H2O = sulfite + 3 NADPH + 4 H(+). The protein operates within sulfur metabolism; hydrogen sulfide biosynthesis; hydrogen sulfide from sulfite (NADPH route): step 1/1. Functionally, component of the sulfite reductase complex that catalyzes the 6-electron reduction of sulfite to sulfide. This is one of several activities required for the biosynthesis of L-cysteine from sulfate. The flavoprotein component catalyzes the electron flow from NADPH -&gt; FAD -&gt; FMN to the hemoprotein component. In Salmonella arizonae (strain ATCC BAA-731 / CDC346-86 / RSK2980), this protein is Sulfite reductase [NADPH] flavoprotein alpha-component.